Reading from the N-terminus, the 90-residue chain is Small ribosomal subunit protein uS15 (90 aa).

This sequence belongs to the universal ribosomal protein uS15 family. In terms of assembly, part of the 30S ribosomal subunit. Forms a bridge to the 50S subunit in the 70S ribosome, contacting the 23S rRNA.

Functionally, one of the primary rRNA binding proteins, it binds directly to 16S rRNA where it helps nucleate assembly of the platform of the 30S subunit by binding and bridging several RNA helices of the 16S rRNA. In terms of biological role, forms an intersubunit bridge (bridge B4) with the 23S rRNA of the 50S subunit in the ribosome. This is Small ribosomal subunit protein uS15 from Tropheryma whipplei (strain TW08/27) (Whipple's bacillus).